The chain runs to 229 residues: Large ribosomal subunit protein uL1 (229 aa).

The protein belongs to the universal ribosomal protein uL1 family. Part of the 50S ribosomal subunit.

Its function is as follows. Binds directly to 23S rRNA. The L1 stalk is quite mobile in the ribosome, and is involved in E site tRNA release. Protein L1 is also a translational repressor protein, it controls the translation of the L11 operon by binding to its mRNA. This chain is Large ribosomal subunit protein uL1, found in Gemmatimonas aurantiaca (strain DSM 14586 / JCM 11422 / NBRC 100505 / T-27).